Here is a 291-residue protein sequence, read N- to C-terminus: Bifunctional protein FolD (291 aa).

Residues 168 to 170 (GRG), threonine 195, and isoleucine 236 contribute to the NADP(+) site.

It belongs to the tetrahydrofolate dehydrogenase/cyclohydrolase family. As to quaternary structure, homodimer.

The enzyme catalyses (6R)-5,10-methylene-5,6,7,8-tetrahydrofolate + NADP(+) = (6R)-5,10-methenyltetrahydrofolate + NADPH. It catalyses the reaction (6R)-5,10-methenyltetrahydrofolate + H2O = (6R)-10-formyltetrahydrofolate + H(+). The protein operates within one-carbon metabolism; tetrahydrofolate interconversion. In terms of biological role, catalyzes the oxidation of 5,10-methylenetetrahydrofolate to 5,10-methenyltetrahydrofolate and then the hydrolysis of 5,10-methenyltetrahydrofolate to 10-formyltetrahydrofolate. This is Bifunctional protein FolD from Bifidobacterium longum subsp. infantis (strain ATCC 15697 / DSM 20088 / JCM 1222 / NCTC 11817 / S12).